Here is a 697-residue protein sequence, read N- to C-terminus: Potassium-transporting ATPase ATP-binding subunit (697 aa).

Helical transmembrane passes span 36-56 (VMFV…RDLI), 66-86 (LQII…EAVA), 218-238 (IALN…TATI), and 253-273 (VLVA…LSAI). Asp306 serves as the catalytic 4-aspartylphosphate intermediate. Residues Asp343, Glu347, 376–383 (FTAQTRMS), and Lys394 contribute to the ATP site. Asp526 and Asp530 together coordinate Mg(2+). 3 helical membrane-spanning segments follow: residues 595 to 615 (YFAI…QSTG), 631 to 651 (AILS…PLSL), and 669 to 689 (LLVY…IIDM).

The protein belongs to the cation transport ATPase (P-type) (TC 3.A.3) family. Type IA subfamily. The system is composed of three essential subunits: KdpA, KdpB and KdpC.

The protein resides in the cell inner membrane. It catalyses the reaction K(+)(out) + ATP + H2O = K(+)(in) + ADP + phosphate + H(+). Its function is as follows. Part of the high-affinity ATP-driven potassium transport (or Kdp) system, which catalyzes the hydrolysis of ATP coupled with the electrogenic transport of potassium into the cytoplasm. This subunit is responsible for energy coupling to the transport system and for the release of the potassium ions to the cytoplasm. This chain is Potassium-transporting ATPase ATP-binding subunit, found in Mesorhizobium japonicum (strain LMG 29417 / CECT 9101 / MAFF 303099) (Mesorhizobium loti (strain MAFF 303099)).